The sequence spans 305 residues: N-acetylmuramic acid 6-phosphate etherase (305 aa).

The interval 1-24 (MTTPPSSPLSDPRRTEGVHPTHTD) is disordered. The segment covering 11–24 (DPRRTEGVHPTHTD) has biased composition (basic and acidic residues). An SIS domain is found at 62-225 (ALPRLERGGR…SSALMVRLGK (164 aa)). Residue glutamate 90 is the Proton donor of the active site. The active site involves glutamate 121.

Belongs to the GCKR-like family. MurNAc-6-P etherase subfamily. As to quaternary structure, homodimer.

It catalyses the reaction N-acetyl-D-muramate 6-phosphate + H2O = N-acetyl-D-glucosamine 6-phosphate + (R)-lactate. It participates in amino-sugar metabolism; N-acetylmuramate degradation. Its function is as follows. Specifically catalyzes the cleavage of the D-lactyl ether substituent of MurNAc 6-phosphate, producing GlcNAc 6-phosphate and D-lactate. The chain is N-acetylmuramic acid 6-phosphate etherase from Deinococcus geothermalis (strain DSM 11300 / CIP 105573 / AG-3a).